Reading from the N-terminus, the 300-residue chain is Lysenin-related protein 3 (300 aa).

Residues 12-35 (EEIEVDVVAVWKEGYVYENRGDTS) are N-terminal cap domain. The interval 36 to 109 (VEQKITMTKG…SQVIEHTVTI (74 aa)) is beta-hairpin domain. Residues 110 to 158 (PPTSKFTRWKLNADVGGTDIEYMYLIDEVTPISVTQTIPQVIRSRAKIL) form an N-terminal cap domain region. Residues 159–299 (VGRQIHLGTT…EDKWILEVVN (141 aa)) are C-terminal receptor-binding domain. 4 residues coordinate an N-(acyl)-sphingosylphosphocholine: Lys-187, Ser-229, Tyr-235, and Tyr-284. Cys-274 and Cys-285 are joined by a disulfide.

It belongs to the lysenin family. As to quaternary structure, binds to sphingomyelin as a monomer by using its C-terminal domain. Forms a nonamer when sphingomyelin/LRP-3 ratio is lower than ca 500. Oligomerization, but not binding, is influenced by the fluidity of sphingomyelin. In terms of tissue distribution, expressed by coelomocytes.

The protein resides in the secreted. Its subcellular location is the target cell membrane. Pore-forming toxin that specifically binds sphingomyelin in the plasma membrane of various cells. Has antibacterial and hemolytic activity. The sequence is that of Lysenin-related protein 3 from Eisenia fetida (Red wiggler worm).